Consider the following 146-residue polypeptide: Gastrin-releasing peptide (146 aa).

Residues 1–23 (MRGREFPLVLLALVLCQAPRGPA) form the signal peptide. M50 carries the methionine amide modification. Residues 54 to 146 (STGESPYAYE…QHEGRIPQLN (93 aa)) constitute a propeptide that is removed on maturation. Residues 95 to 146 (SHQPPQWEPLGIRQSTWDSKDGSNFKDMGPRLKVDGLSAPGSQHEGRIPQLN) form a disordered region. A compositionally biased stretch (basic and acidic residues) spans 112 to 128 (DSKDGSNFKDMGPRLKV).

It belongs to the bombesin/neuromedin-B/ranatensin family.

The protein resides in the secreted. Its subcellular location is the cytoplasmic vesicle. The protein localises to the secretory vesicle lumen. It is found in the cell projection. It localises to the neuron projection. Functionally, stimulates the release of gastrin and other gastrointestinal hormones. Contributes to the perception of prurient stimuli and to the transmission of itch signals in the spinal cord that promote scratching behavior. Contributes primarily to nonhistaminergic itch sensation. In one study, shown to act in the amygdala as part of an inhibitory network which inhibits memory specifically related to learned fear. In another study, shown to act on vasoactive intestinal peptide (VIP)-expressing cells in the auditory cortex, most likely via extrasynaptic diffusion from local and long-range sources, to mediate disinhibition of glutamatergic cells via VIP cell-specific GRPR signaling which leads to enhanced auditory fear memories. Contributes to the regulation of food intake. Inhibits voltage-gated sodium channels but enhances voltage-gated potassium channels in hippocampal neurons. Induces sighing by acting directly on the pre-Botzinger complex, a cluster of several thousand neurons in the ventrolateral medulla responsible for inspiration during respiratory activity. Induces an itch response through activation of receptors present on mast cells, triggering mast cell degranulation. This Sus scrofa (Pig) protein is Gastrin-releasing peptide (GRP).